The primary structure comprises 397 residues: L-asparaginase-like protein GM15681 (397 aa).

An N-terminal signal peptide occupies residues methionine 1–serine 22. 3 disulfide bridges follow: cysteine 90/cysteine 95, cysteine 189/cysteine 205, and cysteine 344/cysteine 371.

Belongs to the Ntn-hydrolase family.

This is L-asparaginase-like protein GM15681 from Drosophila sechellia (Fruit fly).